The following is a 327-amino-acid chain: MPTKMRTTRNLLLMATLLGSALFARAAEKEMTIGAIYLDTQGYYAGVRQGVQDAAKDSSVQVQLIETNAQGDISKESTFVDTLVARNVDAIILSAVSENGSSRTVRRASEAGIPVICYNTCINQKGVDKYVSAYLVGDPLEFGKKLGNAAADYFIANKIDQPKIAVINCEAFEVCVQRRKGFEEVLKSRVPGAQIVANQEGTVLDKAISVGEKLIISTPDLNAIMGESGGATLGAVKAVRNQNQAGKIAVFGSDMTTEIAQELENNQVLKAVVDISGKKMGNAVFAQTLKVINKQADGEKVIQVPIDLYTKTEDGKQWLATHVDGLP.

The signal sequence occupies residues 1-26; that stretch reads MPTKMRTTRNLLLMATLLGSALFARA.

It belongs to the bacterial solute-binding protein 2 family.

It localises to the periplasm. Functionally, probably part of the binding-protein-dependent transport system YphDEF. This Escherichia coli (strain K12) protein is ABC transporter periplasmic-binding protein YphF (yphF).